The sequence spans 197 residues: uncharacterized protein (197 aa).

This is an uncharacterized protein from Bacillus subtilis (strain 168).